Consider the following 726-residue polypeptide: ATP-dependent permease MDL1, mitochondrial (726 aa).

Residues 1 to 112 (MDPIRFGLSR…LAFLKLCVRH (112 aa)) constitute a mitochondrion transit peptide. N66, N113, and N132 each carry an N-linked (GlcNAc...) asparagine glycan. Helical transmembrane passes span 158 to 178 (FFIA…IPYI), 196 to 216 (IMGI…FLGS), 306 to 326 (GYMS…GEYV), 386 to 406 (GIFF…ILAL), and 423 to 443 (SFLL…GCFT). One can recognise an ABC transmembrane type-1 domain in the interval 158-447 (FFIAGSLLLV…LSGCFTDIMK (290 aa)). Residues 482 to 719 (LSFRNVGFAY…GTNFYKLMRW (238 aa)) enclose the ABC transporter domain. N502 is a glycosylation site (N-linked (GlcNAc...) asparagine). An ATP-binding site is contributed by 517 to 524 (APSGGGKS). Residues N584, N598, and N668 are each glycosylated (N-linked (GlcNAc...) asparagine).

The protein belongs to the ABC transporter superfamily. ABCB family. Mitochondrial peptide exporter (TC 3.A.1.212) subfamily.

Its subcellular location is the mitochondrion inner membrane. In terms of biological role, mediates export of peptides generated upon proteolysis of mitochondrial inner membrane proteins. This is ATP-dependent permease MDL1, mitochondrial (mdl1) from Schizosaccharomyces pombe (strain 972 / ATCC 24843) (Fission yeast).